A 162-amino-acid polypeptide reads, in one-letter code: UPF0114 protein Shewmr4_0646 (162 aa).

Helical transmembrane passes span 15-35 (IMAP…IKFF), 53-73 (LVLV…IVMV), 108-128 (KVAA…FMDV), and 136-156 (IMWY…MGYL).

It belongs to the UPF0114 family.

Its subcellular location is the cell membrane. In Shewanella sp. (strain MR-4), this protein is UPF0114 protein Shewmr4_0646.